Consider the following 301-residue polypeptide: Lipoyl synthase (301 aa).

Cys-53, Cys-58, Cys-64, Cys-79, Cys-83, Cys-86, and Ser-290 together coordinate [4Fe-4S] cluster. The region spanning 65–279 (WSRKTATYML…RIYGKSIGFK (215 aa)) is the Radical SAM core domain.

The protein belongs to the radical SAM superfamily. Lipoyl synthase family. [4Fe-4S] cluster serves as cofactor.

Its subcellular location is the cytoplasm. The catalysed reaction is [[Fe-S] cluster scaffold protein carrying a second [4Fe-4S](2+) cluster] + N(6)-octanoyl-L-lysyl-[protein] + 2 oxidized [2Fe-2S]-[ferredoxin] + 2 S-adenosyl-L-methionine + 4 H(+) = [[Fe-S] cluster scaffold protein] + N(6)-[(R)-dihydrolipoyl]-L-lysyl-[protein] + 4 Fe(3+) + 2 hydrogen sulfide + 2 5'-deoxyadenosine + 2 L-methionine + 2 reduced [2Fe-2S]-[ferredoxin]. The protein operates within protein modification; protein lipoylation via endogenous pathway; protein N(6)-(lipoyl)lysine from octanoyl-[acyl-carrier-protein]: step 2/2. Its function is as follows. Catalyzes the radical-mediated insertion of two sulfur atoms into the C-6 and C-8 positions of the octanoyl moiety bound to the lipoyl domains of lipoate-dependent enzymes, thereby converting the octanoylated domains into lipoylated derivatives. In Leptospira interrogans serogroup Icterohaemorrhagiae serovar copenhageni (strain Fiocruz L1-130), this protein is Lipoyl synthase.